A 254-amino-acid chain; its full sequence is Alcohol dehydrogenase 1 (254 aa).

Residue phenylalanine 10–leucine 33 participates in NAD(+) binding. Substrate is bound at residue serine 138. Residue tyrosine 151 is the Proton acceptor of the active site.

This sequence belongs to the short-chain dehydrogenases/reductases (SDR) family. Homodimer.

It catalyses the reaction a primary alcohol + NAD(+) = an aldehyde + NADH + H(+). It carries out the reaction a secondary alcohol + NAD(+) = a ketone + NADH + H(+). This Drosophila mojavensis (Fruit fly) protein is Alcohol dehydrogenase 1 (Adh1).